We begin with the raw amino-acid sequence, 77 residues long: MISNAKIARINELAAKAKAGVITEEEKAEQQKLRQEYLKGFRSSMKNTLKSVKIIDPEGNDVTPEKLKREQRNNKLH.

Positions 56-77 are disordered; it reads DPEGNDVTPEKLKREQRNNKLH. Basic and acidic residues predominate over residues 63 to 77; it reads TPEKLKREQRNNKLH.

This sequence belongs to the UPF0291 family.

The protein resides in the cytoplasm. This is UPF0291 protein YnzC (ynzC) from Bacillus subtilis (strain 168).